Here is a 125-residue protein sequence, read N- to C-terminus: Gem-associated protein 7 (125 aa).

An N-acetylmethionine modification is found at Met1. Residues 1–29 enclose the SUZ-C domain; sequence MQTPLATPVPVLRLPRGPDGSNRGFAPDG. A disordered region spans residues 1–52; sequence MQTPLATPVPVLRLPRGPDGSNRGFAPDGRRAPPKPEVPEPPESRESWEQQA. Thr3 carries the phosphothreonine modification. One can recognise a Sm domain in the interval 59–125; that stretch reads RYLRSLLAMV…SDIISYTFKP (67 aa).

This sequence belongs to the gemin-7 family. Part of the core SMN complex that contains SMN1, GEMIN2/SIP1, DDX20/GEMIN3, GEMIN4, GEMIN5, GEMIN6, GEMIN7, GEMIN8 and STRAP/UNRIP. Part of the SMN-Sm complex that contains SMN1, GEMIN2/SIP1, DDX20/GEMIN3, GEMIN4, GEMIN5, GEMIN6, GEMIN7, GEMIN8, STRAP/UNRIP and the Sm proteins SNRPB, SNRPD1, SNRPD2, SNRPD3, SNRPE, SNRPF and SNRPG. Interacts with GEMIN6; the interaction is direct. Interacts with STRAP/UNRIP; the interaction is direct. Interacts with GEMIN8; the interaction is direct. Interacts with SNRPB, SNRPD2, SNRPD3 and SNRPE; the interaction is direct.

The protein localises to the nucleus. The protein resides in the nucleoplasm. Its subcellular location is the gem. It is found in the cytoplasm. In terms of biological role, the SMN complex catalyzes the assembly of small nuclear ribonucleoproteins (snRNPs), the building blocks of the spliceosome, and thereby plays an important role in the splicing of cellular pre-mRNAs. Most spliceosomal snRNPs contain a common set of Sm proteins SNRPB, SNRPD1, SNRPD2, SNRPD3, SNRPE, SNRPF and SNRPG that assemble in a heptameric protein ring on the Sm site of the small nuclear RNA to form the core snRNP (Sm core). In the cytosol, the Sm proteins SNRPD1, SNRPD2, SNRPE, SNRPF and SNRPG are trapped in an inactive 6S pICln-Sm complex by the chaperone CLNS1A that controls the assembly of the core snRNP. To assemble core snRNPs, the SMN complex accepts the trapped 5Sm proteins from CLNS1A forming an intermediate. Binding of snRNA inside 5Sm triggers eviction of the SMN complex, thereby allowing binding of SNRPD3 and SNRPB to complete assembly of the core snRNP. The chain is Gem-associated protein 7 (GEMIN7) from Bos taurus (Bovine).